Consider the following 97-residue polypeptide: Intermembrane phospholipid transport system binding protein MlaB (97 aa).

The region spanning 1–97 (MSESLSWMQT…YNLPADVLPR (97 aa)) is the STAS domain.

As to quaternary structure, the complex is composed of two ATP-binding proteins (MlaF), two transmembrane proteins (MlaE), two cytoplasmic solute-binding proteins (MlaB) and six periplasmic solute-binding proteins (MlaD).

The protein resides in the cytoplasm. Its function is as follows. Part of the ABC transporter complex MlaFEDB, which is involved in a phospholipid transport pathway that maintains lipid asymmetry in the outer membrane by retrograde trafficking of phospholipids from the outer membrane to the inner membrane. MlaB plays critical roles in both the assembly and activity of the complex. May act by modulating MlaF structure and stability. This chain is Intermembrane phospholipid transport system binding protein MlaB, found in Escherichia coli (strain K12).